A 155-amino-acid polypeptide reads, in one-letter code: 6,7-dimethyl-8-ribityllumazine synthase (155 aa).

Residues tryptophan 22, 56 to 58, and 80 to 82 contribute to the 5-amino-6-(D-ribitylamino)uracil site; these read SFE and AVI. Position 85 to 86 (85 to 86) interacts with (2S)-2-hydroxy-3-oxobutyl phosphate; it reads AT. Histidine 88 serves as the catalytic Proton donor. A 5-amino-6-(D-ribitylamino)uracil-binding site is contributed by phenylalanine 113. (2S)-2-hydroxy-3-oxobutyl phosphate is bound at residue arginine 127.

It belongs to the DMRL synthase family.

It carries out the reaction (2S)-2-hydroxy-3-oxobutyl phosphate + 5-amino-6-(D-ribitylamino)uracil = 6,7-dimethyl-8-(1-D-ribityl)lumazine + phosphate + 2 H2O + H(+). It participates in cofactor biosynthesis; riboflavin biosynthesis; riboflavin from 2-hydroxy-3-oxobutyl phosphate and 5-amino-6-(D-ribitylamino)uracil: step 1/2. Its function is as follows. Catalyzes the formation of 6,7-dimethyl-8-ribityllumazine by condensation of 5-amino-6-(D-ribitylamino)uracil with 3,4-dihydroxy-2-butanone 4-phosphate. This is the penultimate step in the biosynthesis of riboflavin. This is 6,7-dimethyl-8-ribityllumazine synthase from Chloroflexus aurantiacus (strain ATCC 29364 / DSM 637 / Y-400-fl).